The chain runs to 753 residues: Bile salt-activated lipase (753 aa).

An N-terminal signal peptide occupies residues 1–20; it reads MGRLQLVVLGLTCCWAVASA. The heparin-binding stretch occupies residues 21-121; that stretch reads AKLGAVYTEG…KQVSRDLPVM (101 aa). Residues cysteine 84 and cysteine 100 are joined by a disulfide bond. The N-linked (GlcNAc...) (complex) asparagine glycan is linked to asparagine 207. The active-site Acyl-ester intermediate is serine 214. A disulfide bridge connects residues cysteine 266 and cysteine 277. Residues aspartate 340 and histidine 455 each act as charge relay system in the active site. Positions 555-753 are disordered; the sequence is QEATPVPPTG…EAQMPAVIRF (199 aa). Residues threonine 558, threonine 569, and threonine 579 are each glycosylated (O-linked (GalNAc...) threonine). 17 tandem repeats follow at residues 559 to 569, 570 to 580, 581 to 591, 592 to 602, 603 to 613, 614 to 624, 625 to 635, 636 to 646, 647 to 657, 658 to 668, 669 to 679, 680 to 690, 691 to 701, 702 to 712, 713 to 723, 724 to 734, and 735 to 745. Residues 559-745 are 17 X 11 AA tandem repeats, glycodomain, O-linked (mucin type); it reads PVPPTGDSEA…VPPTDDSKEA (187 aa). O-linked (GalNAc...) threonine glycans are attached at residues threonine 607, threonine 618, threonine 629, threonine 640, threonine 651, threonine 662, and threonine 673. Pro residues predominate over residues 668–683; that stretch reads PPVPPTGDAGPPPVPP.

It belongs to the type-B carboxylesterase/lipase family. As to quaternary structure, interacts with CLC. N- and O-glycosylated. As to expression, mammary gland and pancreas. Detected in pancreatic and duodenal juice (at protein level). Expressed by eosinophils.

The protein resides in the secreted. It carries out the reaction a triacylglycerol + H2O = a diacylglycerol + a fatty acid + H(+). The catalysed reaction is 1,2,3-tri-(9Z-octadecenoyl)-glycerol + H2O = di-(9Z)-octadecenoylglycerol + (9Z)-octadecenoate + H(+). It catalyses the reaction 1,2,3-trioctanoylglycerol + H2O = dioctanoylglycerol + octanoate + H(+). The enzyme catalyses a sterol ester + H2O = a sterol + a fatty acid + H(+). It carries out the reaction cholesteryl (9Z-octadecenoate) + H2O = cholesterol + (9Z)-octadecenoate + H(+). The catalysed reaction is an acetyl ester + H2O = an aliphatic alcohol + acetate + H(+). It catalyses the reaction a butanoate ester + H2O = an aliphatic alcohol + butanoate + H(+). The enzyme catalyses 9-hexadecanoyloxy-octadecanoate + H2O = 9-hydroxy-octadecanoate + hexadecanoate + H(+). It carries out the reaction 9-(9Z-octadecenoyloxy)-octadecanoate + H2O = 9-hydroxy-octadecanoate + (9Z)-octadecenoate + H(+). The catalysed reaction is 1-hexadecanoyl-sn-glycero-3-phosphocholine + H2O = sn-glycerol 3-phosphocholine + hexadecanoate + H(+). It catalyses the reaction 12-hexadecanoyloxy-octadecanoate + H2O = 12-hydroxyoctadecanoate + hexadecanoate + H(+). The enzyme catalyses 12-(9Z-octadecenoyloxy)-octadecanoate + H2O = 12-hydroxyoctadecanoate + (9Z)-octadecenoate + H(+). It carries out the reaction 13-(9Z-octadecenoyloxy)-octadecanoate + H2O = 13-hydroxy-octadecanoate + (9Z)-octadecenoate + H(+). The catalysed reaction is 9-(9Z-hexadecenoyloxy)-octadecanoate + H2O = (9Z)-hexadecenoate + 9-hydroxy-octadecanoate + H(+). It catalyses the reaction 12-(9Z-hexadecenoyloxy)-octadecanoate + H2O = 12-hydroxyoctadecanoate + (9Z)-hexadecenoate + H(+). The enzyme catalyses 13-(9Z-hexadecenoyloxy)-octadecanoate + H2O = 13-hydroxy-octadecanoate + (9Z)-hexadecenoate + H(+). It carries out the reaction 12-octadecanoyloxy-octadecanoate + H2O = 12-hydroxyoctadecanoate + octadecanoate + H(+). The catalysed reaction is 13-octadecanoyloxy-octadecanoate + H2O = 13-hydroxy-octadecanoate + octadecanoate + H(+). It catalyses the reaction 5-(9Z-hexadecenoyloxy)-octadecanoate + H2O = 5-hydroxy-octadecanoate + (9Z)-hexadecenoate + H(+). The enzyme catalyses 9-octadecanoyloxy-octadecanoate + H2O = 9-hydroxy-octadecanoate + octadecanoate + H(+). With respect to regulation, activated by bile salts such as sodium taurocholate. Its function is as follows. Catalyzes the hydrolysis of a wide range of substrates including cholesteryl esters, phospholipids, lysophospholipids, di- and tri-acylglycerols, and fatty acid esters of hydroxy fatty acids (FAHFAs). Preferentially hydrolyzes FAHFAs with the ester bond further away from the carboxylate. Unsaturated FAHFAs are hydrolyzed more quickly than saturated FAHFAs. Has an essential role in the complete digestion of dietary lipids and their intestinal absorption, along with the absorption of fat-soluble vitamins. In Homo sapiens (Human), this protein is Bile salt-activated lipase (CEL).